The sequence spans 363 residues: Peptide chain release factor 1 (363 aa).

Position 237 is an N5-methylglutamine (Gln237).

The protein belongs to the prokaryotic/mitochondrial release factor family. In terms of processing, methylated by PrmC. Methylation increases the termination efficiency of RF1.

It is found in the cytoplasm. Peptide chain release factor 1 directs the termination of translation in response to the peptide chain termination codons UAG and UAA. In Marinobacter nauticus (strain ATCC 700491 / DSM 11845 / VT8) (Marinobacter aquaeolei), this protein is Peptide chain release factor 1.